A 156-amino-acid polypeptide reads, in one-letter code: ATP synthase subunit b (156 aa).

A helical transmembrane segment spans residues 7–27 (LFVQAIVFLILVLFTMKFVWP).

The protein belongs to the ATPase B chain family. As to quaternary structure, F-type ATPases have 2 components, F(1) - the catalytic core - and F(0) - the membrane proton channel. F(1) has five subunits: alpha(3), beta(3), gamma(1), delta(1), epsilon(1). F(0) has three main subunits: a(1), b(2) and c(10-14). The alpha and beta chains form an alternating ring which encloses part of the gamma chain. F(1) is attached to F(0) by a central stalk formed by the gamma and epsilon chains, while a peripheral stalk is formed by the delta and b chains.

The protein resides in the cell inner membrane. F(1)F(0) ATP synthase produces ATP from ADP in the presence of a proton or sodium gradient. F-type ATPases consist of two structural domains, F(1) containing the extramembraneous catalytic core and F(0) containing the membrane proton channel, linked together by a central stalk and a peripheral stalk. During catalysis, ATP synthesis in the catalytic domain of F(1) is coupled via a rotary mechanism of the central stalk subunits to proton translocation. In terms of biological role, component of the F(0) channel, it forms part of the peripheral stalk, linking F(1) to F(0). This chain is ATP synthase subunit b, found in Acidovorax sp. (strain JS42).